The chain runs to 626 residues: Carnitine O-acetyltransferase (626 aa).

K93 carries the post-translational modification N6-succinyllysine. K261 is subject to N6-acetyllysine; alternate. Position 261 is an N6-succinyllysine; alternate (K261). K268 bears the N6-acetyllysine mark. Catalysis depends on H343, which acts as the Proton acceptor. CoA-binding positions include K419 and 423–430 (KSEKLSPD). 2 residues coordinate (R)-carnitine: Y452 and S454. S456 contacts CoA. A (R)-carnitine-binding site is contributed by T465. 2 residues coordinate CoA: R504 and Q555. The short motif at 624–626 (AKL) is the Microbody targeting signal element.

The protein belongs to the carnitine/choline acetyltransferase family. In terms of assembly, monomer.

The protein localises to the endoplasmic reticulum. The protein resides in the peroxisome. It is found in the mitochondrion inner membrane. It catalyses the reaction (R)-carnitine + acetyl-CoA = O-acetyl-(R)-carnitine + CoA. It carries out the reaction propanoyl-CoA + (R)-carnitine = O-propanoyl-(R)-carnitine + CoA. The catalysed reaction is butanoyl-CoA + (R)-carnitine = O-butanoyl-(R)-carnitine + CoA. The enzyme catalyses hexanoyl-CoA + (R)-carnitine = O-hexanoyl-(R)-carnitine + CoA. It catalyses the reaction octanoyl-CoA + (R)-carnitine = O-octanoyl-(R)-carnitine + CoA. It carries out the reaction decanoyl-CoA + (R)-carnitine = O-decanoyl-(R)-carnitine + CoA. The catalysed reaction is 3-methylbutanoyl-CoA + (R)-carnitine = O-3-methylbutanoyl-(R)-carnitine + CoA. The enzyme catalyses 2-methylpropanoyl-CoA + (R)-carnitine = O-isobutanoyl-(R)-carnitine + CoA. It catalyses the reaction 2-methylbutanoyl-CoA + (R)-carnitine = O-2-methylbutanoyl-(R)-carnitine + CoA. It carries out the reaction acetoacetyl-CoA + (R)-carnitine = O-3-oxobutanoyl-(R)-carnitine + CoA. The catalysed reaction is 3-hydroxybutanoyl-CoA + (R)-carnitine = O-3-hydroxybutanoyl-(R)-carnitine + CoA. The enzyme catalyses 4,8-dimethylnonanoyl-CoA + (R)-carnitine = O-4,8-dimethylnonanoyl-(R)-carnitine + CoA. It catalyses the reaction 2,6-dimethylheptanoyl-CoA + (R)-carnitine = O-2,6-dimethylheptanoyl-(R)-carnitine + CoA. In terms of biological role, catalyzes the reversible transfer of acyl groups from carnitine to coenzyme A (CoA) and regulates the acyl-CoA/CoA ratio. Also plays a crucial role in the transport of fatty acids for beta-oxidation. Responsible for the synthesis of short- and branched-chain acylcarnitines. Active towards some branched-chain amino acid oxidation pathway (BCAAO) intermediates. Trans-2-enoyl-CoAs and 2-methylacyl-CoAs are poor substrates. The sequence is that of Carnitine O-acetyltransferase from Mus musculus (Mouse).